Consider the following 311-residue polypeptide: Salutaridine reductase (311 aa).

NADP(+)-binding positions include 21–24 (NKGI), Arg44, 70–71 (DV), and Asn98. Substrate contacts are provided by Tyr129 and Ser180. NADP(+) is bound by residues Tyr236, Lys240, and 267–272 (VKTEMN). Residue Tyr236 is the Proton acceptor of the active site. Cysteines 263 and 305 form a disulfide.

It belongs to the short-chain dehydrogenases/reductases (SDR) family.

It carries out the reaction (7S)-salutaridinol + NADP(+) = salutaridine + NADPH + H(+). The protein operates within alkaloid biosynthesis; morphine biosynthesis. Its activity is regulated as follows. Strong substrate inhibition. Was thought to be due to mutually exclusive productive and non-productive modes of substrate binding in the active site. Alternatively, SALR may undergo significant conformational changes during catalytic turnover. In terms of biological role, short-chain dehydrogenases/reductases involved in biosynthesis of morphinan-type benzylisoquinoline and opiate alkaloids natural products. Catalyzes specifically the stereospecific conversion of salutaridine to salutaridinol. The polypeptide is Salutaridine reductase (Papaver somniferum (Opium poppy)).